A 339-amino-acid chain; its full sequence is MITVLRINHRPYRDKRITTHVALTARAFGASAILVDERDETLENTIRGVISNFGGSFSIKTGCNWIQEFKHFQGIRVHLTMYGRRINDVIDEIRNSGKDVMVLVGSEKVPIEAYEIADYNVSVTNQPISEVSALAIFLDRYFQGKEFEFEFRGRINVQPAERGKIVKIIPDEIECLDLLKKYGASEQLIEHVKAVEGLALKIAERCNADKRVIVAGSLLHDIGRTRTNGIDHAVAGAEILRSENIHDSVVSAVERHIGAGITREEAARLGLPEKDYVPETLEEMIVAQADNLFAGNKRLRLEEVLNIYRKRGLDSAAERIKELHRRISAIAGIDIDEIR.

S-adenosyl-L-methionine contacts are provided by residues leucine 79 and 105–109 (GSEKV). Residues 188-295 (LIEHVKAVEG…VAQADNLFAG (108 aa)) enclose the HD domain.

Belongs to the aTrm56 family. Homodimer.

It localises to the cytoplasm. The enzyme catalyses cytidine(56) in tRNA + S-adenosyl-L-methionine = 2'-O-methylcytidine(56) in tRNA + S-adenosyl-L-homocysteine + H(+). In terms of biological role, specifically catalyzes the AdoMet-dependent 2'-O-ribose methylation of cytidine at position 56 in tRNAs. The polypeptide is tRNA (cytidine(56)-2'-O)-methyltransferase (Thermoplasma acidophilum (strain ATCC 25905 / DSM 1728 / JCM 9062 / NBRC 15155 / AMRC-C165)).